The following is a 69-amino-acid chain: Putative antitoxin AF_1481 (69 aa).

This sequence belongs to the UPF0330 family.

Its function is as follows. Possibly the antitoxin component of a type II toxin-antitoxin (TA) system. The polypeptide is Putative antitoxin AF_1481 (Archaeoglobus fulgidus (strain ATCC 49558 / DSM 4304 / JCM 9628 / NBRC 100126 / VC-16)).